Here is a 124-residue protein sequence, read N- to C-terminus: Small ribosomal subunit protein uS12 (124 aa).

Positions 1–28 are disordered; sequence MPTISQLIGSERKRLTRKTKSPALKSCP. Aspartate 89 bears the 3-methylthioaspartic acid mark. The segment at 104 to 124 is disordered; that stretch reads TAGVKDRRQSRSKYGAKAPKD.

Belongs to the universal ribosomal protein uS12 family. Part of the 30S ribosomal subunit. Contacts proteins S8 and S17. May interact with IF1 in the 30S initiation complex.

Its function is as follows. With S4 and S5 plays an important role in translational accuracy. Functionally, interacts with and stabilizes bases of the 16S rRNA that are involved in tRNA selection in the A site and with the mRNA backbone. Located at the interface of the 30S and 50S subunits, it traverses the body of the 30S subunit contacting proteins on the other side and probably holding the rRNA structure together. The combined cluster of proteins S8, S12 and S17 appears to hold together the shoulder and platform of the 30S subunit. This is Small ribosomal subunit protein uS12 from Prochlorococcus marinus (strain MIT 9312).